Consider the following 659-residue polypeptide: Beta-galactosidase BgaA (659 aa).

Arg-103 is a substrate binding site. Cys-107 lines the Zn(2+) pocket. Substrate is bound at residue Asn-141. Glu-142 functions as the Proton donor in the catalytic mechanism. Positions 148, 150, and 153 each coordinate Zn(2+). The active-site Nucleophile is the Glu-298. Trp-307 contacts substrate.

This sequence belongs to the glycosyl hydrolase 42 family. In terms of assembly, dimer.

It catalyses the reaction Hydrolysis of terminal non-reducing beta-D-galactose residues in beta-D-galactosides.. Its activity is regulated as follows. Inhibited by Cu(2+), Hg(2+) and Zn(2+). No effect with Ca(2+), Mg(2+), Mn(2+) or excess EDTA (10 mM). Functionally, involved in plant cell wall degradation in cooperation with cellulosome. Hydrolyzes both p-nitrophenyl-alpha-L-arabinopyranoside (pNPAp) and p-nitrophenyl-beta-D-galactopyranoside (pNPGp), with higher activity for pNPAp. Shows hydrolysis activity against p-nitrophenyl-beta-D-fucopyranoside (pNPFp), but not against p-nitrophenyl-alpha-L-arabinofuranoside (pNPAf), o-nitrophenyl-beta-D-galactopyranoside (oNPGp), p-nitrophenyl-beta-D-xylopyranoside (pNPXp), p-nitrophenyl-beta-D-glucopyranoside (pNPGLp), p-nitrophenyl-beta-D-cellobiopyranoside (pNPCp), p-nitrophenyl-beta-lactopyranoside (pNPLp) or p-nitrophenyl-alpha-galactopyranoside (pNPalphaGp). No detectable activity against arabinan or arabinoxylan, but activity against arabinogalactan can be detected. Increases degradation activity of alpha-L-arabinofuranosidase (ArfA) and endo-1,4-beta-xylanase (XynA) when corn fiber gum and corn stem powder are used as substrates. The sequence is that of Beta-galactosidase BgaA (bgaA) from Clostridium cellulovorans (strain ATCC 35296 / DSM 3052 / OCM 3 / 743B).